Here is a 366-residue protein sequence, read N- to C-terminus: tRNA/tmRNA (uracil-C(5))-methyltransferase (366 aa).

S-adenosyl-L-methionine contacts are provided by glutamine 189, tyrosine 217, asparagine 222, glutamate 238, and aspartate 298. The Nucleophile role is filled by cysteine 323. Residue glutamate 357 is the Proton acceptor of the active site.

Belongs to the class I-like SAM-binding methyltransferase superfamily. RNA M5U methyltransferase family. TrmA subfamily.

It catalyses the reaction uridine(54) in tRNA + S-adenosyl-L-methionine = 5-methyluridine(54) in tRNA + S-adenosyl-L-homocysteine + H(+). It carries out the reaction uridine(341) in tmRNA + S-adenosyl-L-methionine = 5-methyluridine(341) in tmRNA + S-adenosyl-L-homocysteine + H(+). In terms of biological role, dual-specificity methyltransferase that catalyzes the formation of 5-methyluridine at position 54 (m5U54) in all tRNAs, and that of position 341 (m5U341) in tmRNA (transfer-mRNA). This chain is tRNA/tmRNA (uracil-C(5))-methyltransferase, found in Shewanella oneidensis (strain ATCC 700550 / JCM 31522 / CIP 106686 / LMG 19005 / NCIMB 14063 / MR-1).